A 130-amino-acid chain; its full sequence is Small ribosomal subunit protein uS8 (130 aa).

It belongs to the universal ribosomal protein uS8 family. Part of the 30S ribosomal subunit. Contacts proteins S5 and S12.

Functionally, one of the primary rRNA binding proteins, it binds directly to 16S rRNA central domain where it helps coordinate assembly of the platform of the 30S subunit. In Glaesserella parasuis serovar 5 (strain SH0165) (Haemophilus parasuis), this protein is Small ribosomal subunit protein uS8.